The following is a 939-amino-acid chain: MKDKIVIKGAKVHNLKNVDLTVPRNEFVVFTGLSGSGKSSLAFDTLYAEGQRRYMESLSSYARQFLGQMDKPNVEYIEGLSPAISIDQKTTGRNPRSTVGTVTEIYDYLRLLYAKIGVPHCPNCGKEISQQTVDQIVDSVMKLEERTKIQVLAPVVRGRKGEHTKLIAHIKKSGFVRVRIDGEVYEIDEDEIKLDKNKKHHIEALVDRIVIKQGVEGRLTDSVETALKLAEGLVVINVMGKEDMLFSENFACPDCGISIGEISPSMFSFNAPFGKCDVCDGIGTLLEIDEDLVIPDKSKSIMEGAIAPWGEGRLKEESWTFGVLKALSKKYKLDINKPIEDYDEKTLNILLYGAPDVLKVNYVKDSQEMVFNHHYEGIINQMKRRYMESNSDYIKSEIENYMSNNPCPKCKGARLKKEVLAITVGNKNIFEFCSMPIREEVSFIDTLELSNKHKIISAQIVKEIKSRLEFLINVGLDYLNLAREARTLSGGESQRIRLATQIGSSLVGVLYILDEPSIGLHQRDNDRLIATMKNLKDIGNTLIVVEHDEDTIKAADFIVDIGPGAGEHGGEIIAAGSLEDIKNCKESITGQYLTGVKKIEVPKERREAGKNFIEIVGAKENNLKNVNVKFPVGLFTCVTGVSGSGKSTLVNEILYKALNKKINRSKLNPGKYKSINGIENIDKIIDINQSPIGRTPRSNPATYTGVFDIIRELYASTKEAKLRGYKAGRFSFNVKGGRCEACKGDGIVRIEMQFLSDVYVPCDVCKGKRYNRETLEIKYKDKNIDDLLNMTVEDALKFFENLPRIKNKLQTLADVGLGYVRLGQPSTQLSGGEAQRIKLAYELSKRSTGKTLYILDEPTTGLHTDDVKKLISILQRLTDMGNTVVVIEHNLDVIKCADYIVDLGPEGGEKGGTILCSGTPEQVAQNSSSYTGQYLKKML.

Residue 32-39 (GLSGSGKS) coordinates ATP. Residues 252–279 (CPDCGISIGEISPSMFSFNAPFGKCDVC) form a C4-type zinc finger. ABC transporter domains lie at 309 to 588 (WGEG…KESI) and 608 to 936 (AGKN…QYLK). 640 to 647 (GVSGSGKS) lines the ATP pocket. The C4-type zinc finger occupies 739 to 765 (CEACKGDGIVRIEMQFLSDVYVPCDVC).

The protein belongs to the ABC transporter superfamily. UvrA family. Forms a heterotetramer with UvrB during the search for lesions.

It is found in the cytoplasm. The UvrABC repair system catalyzes the recognition and processing of DNA lesions. UvrA is an ATPase and a DNA-binding protein. A damage recognition complex composed of 2 UvrA and 2 UvrB subunits scans DNA for abnormalities. When the presence of a lesion has been verified by UvrB, the UvrA molecules dissociate. The protein is UvrABC system protein A of Clostridium acetobutylicum (strain ATCC 824 / DSM 792 / JCM 1419 / IAM 19013 / LMG 5710 / NBRC 13948 / NRRL B-527 / VKM B-1787 / 2291 / W).